Consider the following 83-residue polypeptide: uncharacterized protein (83 aa).

A disordered region spans residues 58–83 (EHGHDDEYDEFSDPNAWVPRRSRDTG).

This is an uncharacterized protein from Mycobacterium tuberculosis (strain CDC 1551 / Oshkosh).